A 1124-amino-acid chain; its full sequence is Angiopoietin-1 receptor (1124 aa).

Positions 1 to 22 are cleaved as a signal peptide; the sequence is MDSLASLVLCGVSLLLSGTVEG. Over 23–748 the chain is Extracellular; the sequence is AMDLILINSL…ADLGGGKMLL (726 aa). Cys44 and Cys102 are oxidised to a cystine. Residues 44–123 form the Ig-like C2-type 1 domain; it reads CIASGWRPHE…RTMKMRQQAS (80 aa). N-linked (GlcNAc...) asparagine glycans are attached at residues Asn140 and Asn158. EGF-like domains lie at 210 to 252, 254 to 299, and 301 to 341; these read RCEA…RTCE, ACEL…LQCN, and ACHP…LQCE. Intrachain disulfides connect Cys211/Cys220, Cys224/Cys233, Cys227/Cys240, Cys242/Cys251, Cys255/Cys264, Cys268/Cys274, Cys280/Cys287, Cys289/Cys298, Cys302/Cys311, Cys315/Cys323, Cys317/Cys329, Cys331/Cys340, and Cys370/Cys424. An Ig-like C2-type 2 domain is found at 350 to 440; it reads PKIVDLPDHI…GMVEKPFNIS (91 aa). N-linked (GlcNAc...) asparagine glycans are attached at residues Asn399, Asn438, Asn464, Asn560, Asn596, Asn649, and Asn691. Fibronectin type-III domains lie at 447–541, 545–636, and 641–735; these read PLNA…TASI, PPRG…TLSD, and QPEN…LPES. A helical membrane pass occupies residues 749 to 769; the sequence is IAILGSAGMTCLTVLLAFLII. Topologically, residues 770 to 1124 are cytoplasmic; the sequence is LQLKRANVQR…GIDCSAEEAA (355 aa). A Protein kinase domain is found at 824 to 1096; sequence IKFQDVIGEG…QILVSLNRML (273 aa). Residues 830–838 and Lys855 contribute to the ATP site; that span reads IGEGNFGQV. Tyr860 carries the phosphotyrosine; by autocatalysis modification. Asp964 functions as the Proton acceptor in the catalytic mechanism. Phosphotyrosine; by autocatalysis is present on residues Tyr992, Tyr1102, and Tyr1108.

This sequence belongs to the protein kinase superfamily. Tyr protein kinase family. Tie subfamily. Homodimer. Heterodimer with TIE1. Interacts with ANGPT1, ANGPT2 and ANGPT4. At cell-cell contacts in quiescent cells, forms a signaling complex composed of ANGPT1 plus TEK molecules from two adjoining cells. In the absence of endothelial cell-cell contacts, interaction with ANGPT1 mediates contacts with the extracellular matrix. Interacts with PTPRB; this promotes endothelial cell-cell adhesion. Interacts with DOK2, GRB2, GRB7, GRB14, PIK3R1 and PTPN11/SHP2. Colocalizes with DOK2 at contacts with the extracellular matrix in migrating cells. Interacts (tyrosine phosphorylated) with TNIP2. Interacts (tyrosine phosphorylated) with SHC1 (via SH2 domain). Proteolytic processing leads to the shedding of the extracellular domain (soluble TIE-2 alias sTIE-2). In terms of processing, autophosphorylated on tyrosine residues in response to ligand binding. Autophosphorylation occurs in trans, i.e. one subunit of the dimeric receptor phosphorylates tyrosine residues on the other subunit. Autophosphorylation occurs in a sequential manner, where Tyr-992 in the kinase activation loop is phosphorylated first, followed by autophosphorylation at Tyr-1108 and at additional tyrosine residues. ANGPT1-induced phosphorylation is impaired during hypoxia, due to increased expression of ANGPT2. Phosphorylation is important for interaction with GRB14, PIK3R1 and PTPN11. Phosphorylation at Tyr-1102 is important for interaction with SHC1, GRB2 and GRB7. Phosphorylation at Tyr-1108 is important for interaction with DOK2 and for coupling to downstream signal transduction pathways in endothelial cells. Dephosphorylated by PTPRB. Post-translationally, ubiquitinated. The phosphorylated receptor is ubiquitinated and internalized, leading to its degradation. Detected in umbilical vein endothelial cells. Proteolytic processing gives rise to a soluble extracellular domain that is detected in blood plasma (at protein level). Predominantly expressed in endothelial cells and their progenitors, the angioblasts. Has been directly found in placenta and lung, with a lower level in umbilical vein endothelial cells, brain and kidney.

It is found in the cell membrane. It localises to the cell junction. Its subcellular location is the focal adhesion. The protein resides in the cytoplasm. The protein localises to the cytoskeleton. It is found in the secreted. The enzyme catalyses L-tyrosyl-[protein] + ATP = O-phospho-L-tyrosyl-[protein] + ADP + H(+). Its activity is regulated as follows. Angiopoietin binding leads to receptor dimerization and activation by autophosphorylation at Tyr-992 on the kinase activation loop. Inhibited by staurosporine, K252a, PP2, damnacanthal, SB203580, CEP-11207, CEP-11981 and CE-245677. Inhibited by triazine, thienopyrimidine and thiazolopyrimidine derivatives. In terms of biological role, tyrosine-protein kinase that acts as a cell-surface receptor for ANGPT1, ANGPT2 and ANGPT4 and regulates angiogenesis, endothelial cell survival, proliferation, migration, adhesion and cell spreading, reorganization of the actin cytoskeleton, but also maintenance of vascular quiescence. Has anti-inflammatory effects by preventing the leakage of pro-inflammatory plasma proteins and leukocytes from blood vessels. Required for normal angiogenesis and heart development during embryogenesis. Required for post-natal hematopoiesis. After birth, activates or inhibits angiogenesis, depending on the context. Inhibits angiogenesis and promotes vascular stability in quiescent vessels, where endothelial cells have tight contacts. In quiescent vessels, ANGPT1 oligomers recruit TEK to cell-cell contacts, forming complexes with TEK molecules from adjoining cells, and this leads to preferential activation of phosphatidylinositol 3-kinase and the AKT1 signaling cascades. In migrating endothelial cells that lack cell-cell adhesions, ANGT1 recruits TEK to contacts with the extracellular matrix, leading to the formation of focal adhesion complexes, activation of PTK2/FAK and of the downstream kinases MAPK1/ERK2 and MAPK3/ERK1, and ultimately to the stimulation of sprouting angiogenesis. ANGPT1 signaling triggers receptor dimerization and autophosphorylation at specific tyrosine residues that then serve as binding sites for scaffold proteins and effectors. Signaling is modulated by ANGPT2 that has lower affinity for TEK, can promote TEK autophosphorylation in the absence of ANGPT1, but inhibits ANGPT1-mediated signaling by competing for the same binding site. Signaling is also modulated by formation of heterodimers with TIE1, and by proteolytic processing that gives rise to a soluble TEK extracellular domain. The soluble extracellular domain modulates signaling by functioning as decoy receptor for angiopoietins. TEK phosphorylates DOK2, GRB7, GRB14, PIK3R1; SHC1 and TIE1. This chain is Angiopoietin-1 receptor, found in Homo sapiens (Human).